Consider the following 158-residue polypeptide: F(420)H(2) dehydrogenase subunit C (158 aa).

It belongs to the complex I 30 kDa subunit family. As to quaternary structure, the FPO complex is composed of at least 13 different subunits.

The protein localises to the cell membrane. It catalyses the reaction methanophenazine + reduced coenzyme F420-(gamma-L-Glu)(n) = dihydromethanophenazine + oxidized coenzyme F420-(gamma-L-Glu)(n) + H(+). Component of the F(420)H(2) dehydrogenase (FPO complex) which is part of the energy-conserving F(420)H(2):heterodisulfide oxidoreductase system. The membrane-bound electron transfer system of the complex plays an important role in the metabolism of methylotrophic methanogens when the organisms grow on methanol or methylamines. Catalyzes the oxidation of methanophenazine to dihydromethanophenazine. It shuttles electrons from F(420)H(2), via FAD and iron-sulfur (Fe-S) centers, to methanophenazine (an electron carrier in the membrane). It couples the redox reaction to proton translocation (for every two electrons transferred, two hydrogen ions are translocated across the cytoplasmic membrane), and thus conserves the redox energy in a proton gradient. It also catalyzes the oxidation of F(420)H(2) with quinones such as 2,3-dimethyl-1,4-naphthoquinone, 2-methyl-1,4-naphthoquinone and tetramethyl-p-benzoquinone. The protein is F(420)H(2) dehydrogenase subunit C (fpoC) of Methanosarcina mazei (strain ATCC BAA-159 / DSM 3647 / Goe1 / Go1 / JCM 11833 / OCM 88) (Methanosarcina frisia).